The following is a 319-amino-acid chain: Lipoyl synthase (319 aa).

The span at 1–12 shows a compositional bias: polar residues; sequence MVTIVDTLSNTP. Residues 1-32 are disordered; it reads MVTIVDTLSNTPLRPRHPEKANRPDSISPAKP. [4Fe-4S] cluster-binding residues include Cys-61, Cys-66, Cys-72, Cys-87, Cys-91, Cys-94, and Ser-300. The Radical SAM core domain occupies 73-289; that stretch reads WDKKHATFMI…ETVAYTKGFL (217 aa).

It belongs to the radical SAM superfamily. Lipoyl synthase family. [4Fe-4S] cluster serves as cofactor.

The protein resides in the cytoplasm. It carries out the reaction [[Fe-S] cluster scaffold protein carrying a second [4Fe-4S](2+) cluster] + N(6)-octanoyl-L-lysyl-[protein] + 2 oxidized [2Fe-2S]-[ferredoxin] + 2 S-adenosyl-L-methionine + 4 H(+) = [[Fe-S] cluster scaffold protein] + N(6)-[(R)-dihydrolipoyl]-L-lysyl-[protein] + 4 Fe(3+) + 2 hydrogen sulfide + 2 5'-deoxyadenosine + 2 L-methionine + 2 reduced [2Fe-2S]-[ferredoxin]. Its pathway is protein modification; protein lipoylation via endogenous pathway; protein N(6)-(lipoyl)lysine from octanoyl-[acyl-carrier-protein]: step 2/2. In terms of biological role, catalyzes the radical-mediated insertion of two sulfur atoms into the C-6 and C-8 positions of the octanoyl moiety bound to the lipoyl domains of lipoate-dependent enzymes, thereby converting the octanoylated domains into lipoylated derivatives. This is Lipoyl synthase from Bradyrhizobium sp. (strain BTAi1 / ATCC BAA-1182).